A 435-amino-acid polypeptide reads, in one-letter code: MSIITDVYAREVLDSRGNPTLEVEVYTESGAFGRGMVPSGASTGEHEAVELRDGDKSRYLGLGTQKAVDNVNNIIAEAIIGYDVRDQQAIDRAMIALDGTPNKGKLGANAILGVSIAVARAAADYLEVPLYTYLGGFNTKVLPTPMMNIINGGSHSDAPIAFQEFMIMPVGAPTFKEGLRWGAEVFHALKKILKARGLVTAVGDEGGFAPKFEGTEDGVETILKAIEAAGYEAGENGIMIGFDCASSEFYDKERKVYDYTKFEGEGAAVRTSAEQIDYLEELVNKYPIITIEDGMDENDWEGWKALTERLGKRVQLVGDDFFVTNTEYLARGIKEGAANSILIKVNQIGTLTETFEAIEMAKEAGYTAVVSHRSGETEDSTIADIAVATNAGQIKTGSLSRTDRIAKYNQLLRIEDQLGEVAQYKGIKSFYNLKK.

A (2R)-2-phosphoglycerate-binding site is contributed by Q163. E205 (proton donor) is an active-site residue. The Mg(2+) site is built by D243, E292, and D319. (2R)-2-phosphoglycerate contacts are provided by K344, R373, S374, and K395. K344 functions as the Proton acceptor in the catalytic mechanism.

It belongs to the enolase family. Requires Mg(2+) as cofactor.

The protein localises to the cytoplasm. Its subcellular location is the secreted. It is found in the cell surface. The catalysed reaction is (2R)-2-phosphoglycerate = phosphoenolpyruvate + H2O. Its pathway is carbohydrate degradation; glycolysis; pyruvate from D-glyceraldehyde 3-phosphate: step 4/5. Catalyzes the reversible conversion of 2-phosphoglycerate (2-PG) into phosphoenolpyruvate (PEP). It is essential for the degradation of carbohydrates via glycolysis. The chain is Enolase from Streptococcus equi subsp. zooepidemicus (strain MGCS10565).